Reading from the N-terminus, the 949-residue chain is Pyruvate, phosphate dikinase, chloroplastic (949 aa).

The transit peptide at 1–74 (MASAFKGILI…VMAPASDPTS (74 aa)) directs the protein to the chloroplast. Phosphothreonine; by PDRP1 is present on Thr530. Catalysis depends on His532, which acts as the Tele-phosphohistidine intermediate. Substrate is bound by residues Arg638, Arg695, Glu824, Gly845, Thr846, Asn847, and Asp848. Glu824 contacts Mg(2+). A Mg(2+)-binding site is contributed by Asp848. Cys910 (proton donor) is an active-site residue.

Belongs to the PEP-utilizing enzyme family. As to quaternary structure, homodimer. Requires Mg(2+) as cofactor. In terms of processing, phosphorylation of Thr-530 in the dark inactivates the enzyme. Dephosphorylation upon light stimulation reactivates the enzyme.

The protein localises to the plastid. The protein resides in the chloroplast. It carries out the reaction pyruvate + phosphate + ATP = phosphoenolpyruvate + AMP + diphosphate + H(+). Activated by light-induced dephosphorylation. Inhibited by dark-induced phosphorylation. Both reactions are catalyzed by PDRP1. In terms of biological role, formation of phosphoenolpyruvate, which is the primary acceptor of CO(2) in C4 and some Crassulacean acid metabolism plants. This is Pyruvate, phosphate dikinase, chloroplastic (PPD) from Mesembryanthemum crystallinum (Common ice plant).